The following is a 581-amino-acid chain: Interleukin-22 receptor subunit alpha-1 (581 aa).

The N-terminal stretch at 1 to 15 (MRTLLTILAAGSLLA) is a signal peptide. Residues 16-228 (HITEDTSDLL…VKTLPDRTWT (213 aa)) lie on the Extracellular side of the membrane. Fibronectin type-III domains are found at residues 18-115 (TEDT…RFSS) and 141-221 (PTYT…RVKT). A disulfide bridge connects residues cysteine 71 and cysteine 79. Asparagine 80 carries an N-linked (GlcNAc...) asparagine glycan. A disulfide bond links cysteine 128 and cysteine 217. The helical transmembrane segment at 229–249 (YSFSGAFLFSLGFLVAGLCYL) threads the bilayer. Residues 250-581 (SYRYITKPPP…GLALTVQWES (332 aa)) are Cytoplasmic-facing. Disordered stretches follow at residues 354-493 (QAAP…SSLK) and 539-563 (PSDEDPVSKTEAESPGLQAPDLESP). The segment covering 378 to 389 (TPQAVSETQLPS) has biased composition (polar residues). Phosphoserine is present on residues serine 410 and serine 414. A compositionally biased stretch (polar residues) spans 440–449 (CSPTGLSLQE).

This sequence belongs to the type II cytokine receptor family. In terms of assembly, heterodimer with IL10RB and with IL20RB. Interacts with FBXW12; the interaction promotes ubiquitination of IL22RA1. Post-translationally, ubiquitinated.

The protein localises to the cell membrane. Its function is as follows. Component of the receptor for IL20, IL22 and IL24. Component of IL22 receptor formed by IL22RA1 and IL10RB enabling IL22 signaling via JAK/STAT pathways. IL22 also induces activation of MAPK1/MAPK3 and Akt kinases pathways. Component of one of the receptor for IL20 and IL24 formed by IL22RA1 and IL20RB also signaling through STATs activation. Mediates IL24 antiangiogenic activity as well as IL24 inhibitory effect on endothelial cell tube formation and differentiation. The protein is Interleukin-22 receptor subunit alpha-1 (IL22RA1) of Bos taurus (Bovine).